The chain runs to 212 residues: Pyrrolidone-carboxylate peptidase (212 aa).

Residues E80, C143, and H165 contribute to the active site.

This sequence belongs to the peptidase C15 family. Homotetramer.

It is found in the cytoplasm. It carries out the reaction Release of an N-terminal pyroglutamyl group from a polypeptide, the second amino acid generally not being Pro.. Functionally, removes 5-oxoproline from various penultimate amino acid residues except L-proline. The chain is Pyrrolidone-carboxylate peptidase from Vibrio vulnificus (strain CMCP6).